Here is a 128-residue protein sequence, read N- to C-terminus: Large ribosomal subunit protein uL24 (128 aa).

The disordered stretch occupies residues 105 to 128; sequence KAKSRQVGKEKGKYKEETIEKMQE.

The protein belongs to the universal ribosomal protein uL24 family. As to quaternary structure, component of the large ribosomal subunit.

The protein localises to the cytoplasm. Component of the large ribosomal subunit. The ribosome is a large ribonucleoprotein complex responsible for the synthesis of proteins in the cell. In Gallus gallus (Chicken), this protein is Large ribosomal subunit protein uL24 (RPL26).